The sequence spans 343 residues: Fanconi anemia group F protein (343 aa).

As to quaternary structure, belongs to the multisubunit FA complex composed of FANCA, FANCB, FANCC, FANCE, FANCF, FANCG, FANCL/PHF9 and FANCM. In complex with FANCA, FANCG and FANCL, but not with FANCC, nor FANCE, interacts with HES1; this interaction may be essential for the stability and nuclear localization of FA core complex proteins.

The protein localises to the nucleus. Functionally, DNA repair protein that may operate in a postreplication repair or a cell cycle checkpoint function. May be implicated in interstrand DNA cross-link repair and in the maintenance of normal chromosome stability. The chain is Fanconi anemia group F protein from Mus musculus (Mouse).